The following is a 111-amino-acid chain: Integration host factor subunit alpha (111 aa).

It belongs to the bacterial histone-like protein family. As to quaternary structure, heterodimer of an alpha and a beta chain.

Functionally, this protein is one of the two subunits of integration host factor, a specific DNA-binding protein that functions in genetic recombination as well as in transcriptional and translational control. The protein is Integration host factor subunit alpha of Polaromonas sp. (strain JS666 / ATCC BAA-500).